The following is a 158-amino-acid chain: NAD(P)H-quinone oxidoreductase subunit J, chloroplastic (158 aa).

Belongs to the complex I 30 kDa subunit family. As to quaternary structure, NDH is composed of at least 16 different subunits, 5 of which are encoded in the nucleus.

It is found in the plastid. The protein localises to the chloroplast thylakoid membrane. It carries out the reaction a plastoquinone + NADH + (n+1) H(+)(in) = a plastoquinol + NAD(+) + n H(+)(out). The catalysed reaction is a plastoquinone + NADPH + (n+1) H(+)(in) = a plastoquinol + NADP(+) + n H(+)(out). In terms of biological role, NDH shuttles electrons from NAD(P)H:plastoquinone, via FMN and iron-sulfur (Fe-S) centers, to quinones in the photosynthetic chain and possibly in a chloroplast respiratory chain. The immediate electron acceptor for the enzyme in this species is believed to be plastoquinone. Couples the redox reaction to proton translocation, and thus conserves the redox energy in a proton gradient. The polypeptide is NAD(P)H-quinone oxidoreductase subunit J, chloroplastic (Liriodendron tulipifera (Tuliptree)).